A 705-amino-acid polypeptide reads, in one-letter code: Kinesin-like protein KIF2A (705 aa).

Positions 1-216 are globular; that stretch reads MATANFGKIQ…LDYRPLTTAD (216 aa). Residues 65 to 186 are disordered; the sequence is DLVPDEDIEP…QELREKRAQD (122 aa). Serine 75 carries the post-translational modification Phosphoserine. Threonine 96 carries the post-translational modification Phosphothreonine. Lysine 101 is subject to N6-acetyllysine. Residues 122-139 show a composition bias toward polar residues; that stretch reads LPEQSSSAQQNGSVSDIS. A phosphoserine mark is found at serine 134 and serine 139. Residues 158 to 186 are compositionally biased toward basic and acidic residues; that stretch reads CVKEVEKLQEKREKRRLQQQELREKRAQD. The 331-residue stretch at 222–552 folds into the Kinesin motor domain; the sequence is RICVCVRKRP…LRYANRVKEL (331 aa). 312–319 contributes to the ATP binding site; it reads GQTGSGKT. Phosphoserine is present on residues threonine 528 and tyrosine 545. Residues 659 to 698 adopt a coiled-coil conformation; sequence ATQLEAILEQKIDILTELRDKVKSFRAALQEEEQASKQIN.

It belongs to the TRAFAC class myosin-kinesin ATPase superfamily. Kinesin family. MCAK/KIF2 subfamily. As to quaternary structure, interacts with AURKA and PLK1. Interacts with PSRC1. Interacts with MCRS1; the interaction enhances recruitment of KIF2A to the minus ends of spindle microtubules which promotes chromosome alignment. In terms of tissue distribution, highest level in lung. High level in ovary, moderate levels in heart, kidney, placenta, skeletal muscle and spleen (at protein level). Pancreas and spleen express a shorter isoform (at protein level). Expressed in the flagellum of elongated spermatids and sperm in the testis lumen (at protein level). Isoform 1 expressed in neuronal cells. Isoform 2 expressed in astrocytes and fibroblasts.

It is found in the cytoplasm. It localises to the cytoskeleton. The protein resides in the microtubule organizing center. The protein localises to the centrosome. Its subcellular location is the spindle pole. It is found in the spindle. It localises to the lysosome. Functionally, plus end-directed microtubule-dependent motor required for normal brain development. May regulate microtubule dynamics during axonal growth. Required for normal progression through mitosis. Required for normal congress of chromosomes at the metaphase plate. Required for normal spindle dynamics during mitosis. Promotes spindle turnover. Implicated in formation of bipolar mitotic spindles. Has microtubule depolymerization activity. This Mus musculus (Mouse) protein is Kinesin-like protein KIF2A (Kif2a).